The following is an 85-amino-acid chain: Large ribosomal subunit protein bL27 (85 aa).

Belongs to the bacterial ribosomal protein bL27 family.

The chain is Large ribosomal subunit protein bL27 from Xylella fastidiosa (strain 9a5c).